The primary structure comprises 342 residues: Trans-enoyl reductase himH (342 aa).

46–49 serves as a coordination point for NADP(+); that stretch reads TDWK. 133-140 provides a ligand contact to substrate; that stretch reads LSVSTAAS. Residues 168 to 171, 191 to 194, 255 to 256, and 329 to 330 each bind NADP(+); these read SSSV, SQAN, VM, and VS.

This sequence belongs to the zinc-containing alcohol dehydrogenase family. Monomer.

Its pathway is secondary metabolite biosynthesis. In terms of biological role, trans-enoyl reductase; part of the him gene cluster that mediates the biosynthesis of himeic acid A, a ubiquitin-activating enzyme (E1) inhibitor. First, himA, together with the trans-enoyl reductase himH, catalyzes the formation of apolyketide chain, which is then condensed with leucine by the NRPS activity of himA. Dieckmann cyclization and release from himA gives a tetramic acid intermediate as the product of himA PKS-NRPS. HimG then catalyzes alpha-oxidation of the tetramic acid ring, with a subsequent rearrangement to yield apyrone intermediate. Two terminal methyl groups of polyketide and amide side chains are oxidized to carboxylic acids by himC cytochrome P450 monooxygenase to form himeic acid A. Himeic acid A is further converted to himeic acid B and C during culture growth. No gene responsible for pyrone to pyridone conversion was found in the him gene cluster and himeic acid A is non-enzymatically converted to himeic acid C by the incorporation of an ammonium nitrogen atom in a pH5 buffer, and to himeic acid B at a conversion ratio of 50% during incubation in MeOH for 5 days. The sequence is that of Trans-enoyl reductase himH from Aspergillus japonicus.